We begin with the raw amino-acid sequence, 153 residues long: Arachidonate 5-lipoxygenase-activating protein (153 aa).

At 1–8 (MDQEAVGN) the chain is on the lumenal side. The helical transmembrane segment at 9 to 30 (VVLLAIVTLISVVQNGFFAHKV) threads the bilayer. Over 31–52 (EHESRNQNGRSFQRTGTLAFER) the chain is Cytoplasmic. The helical transmembrane segment at 53–77 (VYTANQNCVDAYPTFLAVLWTAGLL) threads the bilayer. Over 78 to 80 (CSQ) the chain is Lumenal. Residues 81–102 (VPAAFAGLMYLFVRQKYFVGYL) traverse the membrane as a helical segment. Topologically, residues 103–107 (GERTQ) are cytoplasmic. The stretch at 108-115 (STPGYIFG) is an intramembrane region. The chain crosses the membrane as a helical span at residues 116-128 (KRIILFLFLMSLA). Residues 129 to 153 (GILNYCLILLFGSDFENYIKTISTT) are Lumenal-facing.

Belongs to the MAPEG family. As to quaternary structure, homotrimer. Interacts with LTC4S and ALOX5.

The protein localises to the nucleus membrane. The protein resides in the endoplasmic reticulum membrane. Required for leukotriene biosynthesis by ALOX5 (5-lipoxygenase). Anchors ALOX5 to the membrane. Binds arachidonic acid, and could play an essential role in the transfer of arachidonic acid to ALOX5. Binds to MK-886, a compound that blocks the biosynthesis of leukotrienes. This chain is Arachidonate 5-lipoxygenase-activating protein (ALOX5AP), found in Oryctolagus cuniculus (Rabbit).